The sequence spans 625 residues: Chaperone protein HtpG (625 aa).

The segment at 1–337 (MSTNQETRGF…TNDLPLNVSR (337 aa)) is a; substrate-binding. The interval 338–554 (EILQENKITA…NDEMTTQMAK (217 aa)) is b. The interval 555–625 (LFAAMGQKAP…FIKRMNKLLG (71 aa)) is c.

The protein belongs to the heat shock protein 90 family. As to quaternary structure, homodimer.

It is found in the cytoplasm. In terms of biological role, molecular chaperone. Has ATPase activity. The chain is Chaperone protein HtpG from Actinobacillus pleuropneumoniae serotype 3 (strain JL03).